Here is a 319-residue protein sequence, read N- to C-terminus: Cytochrome f (319 aa).

Positions 1–34 (MQNRNTYDLKKKMTRLISVLVMIHIITRTSISNA) are cleaved as a signal peptide. Heme-binding residues include Y35, C55, C58, and H59. The helical transmembrane segment at 285-304 (VKGLLLFLASVILAQIFLVL) threads the bilayer.

It belongs to the cytochrome f family. The 4 large subunits of the cytochrome b6-f complex are cytochrome b6, subunit IV (17 kDa polypeptide, petD), cytochrome f and the Rieske protein, while the 4 small subunits are PetG, PetL, PetM and PetN. The complex functions as a dimer. It depends on heme as a cofactor.

It is found in the plastid. The protein localises to the chloroplast thylakoid membrane. Its function is as follows. Component of the cytochrome b6-f complex, which mediates electron transfer between photosystem II (PSII) and photosystem I (PSI), cyclic electron flow around PSI, and state transitions. The chain is Cytochrome f (petA) from Picea abies (Norway spruce).